The chain runs to 393 residues: uncharacterized protein (393 aa).

Residues 1 to 17 (MVSKDQTSFNKRWTLGL) are Cytoplasmic-facing. The chain crosses the membrane as a helical span at residues 18-38 (LMLGLVIILWVLSSFLINLIF). At 39-46 (EDDSYRKP) the chain is on the vacuolar side. The chain crosses the membrane as a helical span at residues 47 to 67 (FFITYTNTAAFIFYLFPTAKA). Topologically, residues 68–132 (VVVNYKDTGR…LYETIKLSAE (65 aa)) are cytoplasmic. Position 93 is a phosphoserine (serine 93). A helical transmembrane segment spans residues 133-153 (FCILWFTANLVTNASLAFTSV). Residues 154 to 156 (ASQ) lie on the Vacuolar side of the membrane. Residues 157–176 (TILSTTSSFFTLFIGAICHV) form a helical membrane-spanning segment. Over 177 to 182 (ESLSKS) the chain is Cytoplasmic. The chain crosses the membrane as a helical span at residues 183-200 (KVLGSFISFVGIIMVTKS). Over 201–219 (DSHQRYQRHIADVSGDDND) the chain is Vacuolar. A helical membrane pass occupies residues 220 to 240 (AVQVLIGNLLALAGAVLYGVY). At 241–257 (STLLKREVGDETRVNMK) the chain is on the cytoplasmic side. Residues 258–278 (IFFGFVGLFNLLFLWPSLIVL) traverse the membrane as a helical segment. Topologically, residues 279 to 292 (DFFGWEPFSLPKDP) are vacuolar. The helical transmembrane segment at 293–313 (KVVVIIFVNCLITFVSDFCWA) threads the bilayer. The Cytoplasmic segment spans residues 314-321 (KAMLLTSP). The chain crosses the membrane as a helical span at residues 322–342 (LTVTVGLSITIPLAMFGDVIF). Over 343–345 (KHK) the chain is Vacuolar. The helical transmembrane segment at 346–366 (TMSALYLFGATLILGSFFIIN) threads the bilayer. Topologically, residues 367-393 (KSSEEEHFENSITASNYESVEVPAANN) are cytoplasmic.

The protein belongs to the TPT transporter family.

The protein localises to the vacuole membrane. This is an uncharacterized protein from Saccharomyces cerevisiae (strain ATCC 204508 / S288c) (Baker's yeast).